The sequence spans 122 residues: Large ribosomal subunit protein bL12 (122 aa).

The protein belongs to the bacterial ribosomal protein bL12 family. Homodimer. Part of the ribosomal stalk of the 50S ribosomal subunit. Forms a multimeric L10(L12)X complex, where L10 forms an elongated spine to which 2 to 4 L12 dimers bind in a sequential fashion. Binds GTP-bound translation factors.

Forms part of the ribosomal stalk which helps the ribosome interact with GTP-bound translation factors. Is thus essential for accurate translation. This is Large ribosomal subunit protein bL12 from Stenotrophomonas maltophilia (strain K279a).